Reading from the N-terminus, the 1279-residue chain is MSGTKWTDEQRQAIFTKNCNLLVVAGAGAGKTAVLVQRIIEKILDKEEPIDIDKLLVVTFTNAAAAEMRERIGDAISKGLDEDPESKVLRKQLTLLNKSNIMTIHSFCLQVIKNNFHTMEIDPNFRICDETEGILMKQEAIDELFDELYEIENEDFINLVESYASRKDTRLQEVVLELHRFAKSAPFPYTWLLNMAEGFNVGENFNFEETLWADMIMEDMKVLLHGFKNMLQQSIDVILNSEGIDYYYEPFKMDLSFINSLLEKSSFKEFRGEIIAYDFPKLPLKRNKDADKEAKERVKKLRDKVKKKIVELKNILDSYENEFIKKEFIFLYPSMKALSNLVILFDKKYEAKKRERDLIDFNDIEHLCLSILTDKNSDGHIIPSDIALNYRKKFAEVLIDEYQDSNLVQEVIMSMVSRVKGYWSFYNGQLIFNEEEINLEEPQIGLDIPNRFMVGDVKQSIYRFRQAKPEIFLDKYNEYNEEEDRKNRKVKLFKNFRSREEVINGVNYLFKQIMSKTIGELDYTEEEALKVGASYGEEVKGEPIELCLMDKKYEISEEVLKEYNVDEEEALDNIQLEGRLVAKKIQKLVGNNLEGGLKVFDKKLGEYRNLQYRDIVILMRATSNWAPVFVEELAKEGIPVFADTNSGYFDTAEIKTMISLLQIIDNPLQDIPLLSVLRSPIASFTDDELIDIRMINKNITFYECMEIIYRLYKNEKLDSYYSFYIEDENKINKIIKDMNEKLKNKICSFIEKLKLWREKSIHIDIDEFIWFLYVETGYYGYAGALQAGEQRQANLRILFQRAKQYAKTSYKGLFNFINFINKLKFSSGDMGSAKILGENENVVRIMSIHKSKGLEFPVVILSGTGKNFNMTDLNKNILFHRDLGYGPDYVDTERRIAYPSLVKNIIKNKIRLETLSEEMRILYVALTRAREKLIITGLINNMDKTVEDWLNLSEDKNKVPEYAVMSGKTYLDWIGPALIKHKDAVSFREELKMTSELSNIVDDKSKWKIELWNKRELLKEKVEEDEVEISEKIKETLMNLEESNYKEEIYKRLSFKYKYDNASSIPTKLSVSDVKKQFILDEKENTEELFKKLELRKPMFMEEKKKISPSERGTIIHLFMQHLDLKKAESEEDIKEQINRLIEREFITYEQSKVISPYKILKFCRGELGKRILNSNNVNKEMPFSIEIPALEIYKELDKEIYKDEKLIIQGVIDCYFEEEDGLVLLDYKTDYVNDIEEIKNRYEIQIKYYEEALNRITGKNVKDKYLYLFSVDNYIKID.

The region spanning 4–499 (TKWTDEQRQA…VKLFKNFRSR (496 aa)) is the UvrD-like helicase ATP-binding domain. 25–32 (AGAGAGKT) is an ATP binding site. Residues 526 to 853 (EEALKVGASY…RIMSIHKSKG (328 aa)) form the UvrD-like helicase C-terminal domain.

This sequence belongs to the helicase family. AddA subfamily. In terms of assembly, heterodimer of AddA and AddB/RexB. It depends on Mg(2+) as a cofactor.

The enzyme catalyses Couples ATP hydrolysis with the unwinding of duplex DNA by translocating in the 3'-5' direction.. It catalyses the reaction ATP + H2O = ADP + phosphate + H(+). In terms of biological role, the heterodimer acts as both an ATP-dependent DNA helicase and an ATP-dependent, dual-direction single-stranded exonuclease. Recognizes the chi site generating a DNA molecule suitable for the initiation of homologous recombination. The AddA nuclease domain is required for chi fragment generation; this subunit has the helicase and 3' -&gt; 5' nuclease activities. In Clostridium botulinum (strain Langeland / NCTC 10281 / Type F), this protein is ATP-dependent helicase/nuclease subunit A.